We begin with the raw amino-acid sequence, 191 residues long: Putative endogenous retrovirus group K member 11-1 Env polyprotein (191 aa).

Residues 1–191 (MPGAIDDHCP…DITLHPQGLV (191 aa)) form a truncated surface protein region.

Belongs to the beta type-B retroviral envelope protein family. HERV class-II K(HML-8) env subfamily. As to expression, cerebellum and testis.

It localises to the virion. Its function is as follows. Retroviral envelope proteins mediate receptor recognition and membrane fusion during early infection. Endogenous envelope proteins may have kept, lost or modified their original function during evolution. The sequence is that of Putative endogenous retrovirus group K member 11-1 Env polyprotein (ERVK11-1) from Homo sapiens (Human).